The following is a 148-amino-acid chain: Large ribosomal subunit protein uL15 (148 aa).

The disordered stretch occupies residues 12–52 (ERKNRKRVGRGGGSGWGGTSGKGHKGQNARSGGGVPAWFEG). Over residues 21–32 (RGGGSGWGGTSG) the composition is skewed to gly residues.

This sequence belongs to the universal ribosomal protein uL15 family. Part of the 50S ribosomal subunit.

Binds to the 23S rRNA. The polypeptide is Large ribosomal subunit protein uL15 (Maridesulfovibrio salexigens (strain ATCC 14822 / DSM 2638 / NCIMB 8403 / VKM B-1763) (Desulfovibrio salexigens)).